The primary structure comprises 575 residues: Cytochrome P450 monooxygenase opaB (575 aa).

N-linked (GlcNAc...) asparagine glycosylation occurs at N6. Residues 37-57 form a helical membrane-spanning segment; it reads FILAAILASIILLIIRNSMLS. N83 and N242 each carry an N-linked (GlcNAc...) asparagine glycan. C521 is a binding site for heme.

The protein belongs to the cytochrome P450 family. It depends on heme as a cofactor.

It localises to the membrane. It functions in the pathway secondary metabolite biosynthesis. Its function is as follows. Cytochrome P450 monooxygenase; part of the gene cluster that mediates the biosynthesis of oxepinamides, derivatives of anthranilyl-containing tripeptides that share an oxepin ring and a fused pyrimidinone moiety. The nonribosomal peptide synthetase (NRPS) opaA assembles the quinazolinone core with D-Phe incorporation. The first adenylation domain (A1) of opaA loads and activates anthranilic acid whereas the second A domain (A2) is for activating of L-Phe, which is then converted to D-form by the E domain. The third A domain (A3) is responsible for L-Ile activation and the terminal condensation domain C3 for cyclization and releasing the NRPS product protuboxepin K. The cytochrome P450 monooxygenase opaB then catalyzes alone the oxepin ring formation to convert protuboxepin K into protuboxepin A. The flavoenzyme opaC installs subsequently one hydroxyl group at the oxepin ring, accompanied by double bond migration, to form 15-epi-oxepinamide E. The epimerase opaE changes the D-Phe residue back to L-form, leading to oxepinamide E, which is further methylated at the hydroxyl group at C-12 by the O-methyltransferase OpaF to yield oxepinamide F. The chain is Cytochrome P450 monooxygenase opaB from Aspergillus ustus.